Consider the following 345-residue polypeptide: Protein-arginine kinase (345 aa).

The 231-residue stretch at 15 to 245 (LVISSRIRLA…LQIINQEIIS (231 aa)) folds into the Phosphagen kinase C-terminal domain. Residues 18 to 22 (SSRIR), His-82, Arg-116, 167 to 171 (RASVM), and 198 to 203 (RGLYGE) contribute to the ATP site. The short motif at 328 to 333 (RDFNRA) is the RDXXRA motif of the pArg binding pocket involved in allosteric regulation element.

The protein belongs to the ATP:guanido phosphotransferase family.

It carries out the reaction L-arginyl-[protein] + ATP = N(omega)-phospho-L-arginyl-[protein] + ADP + H(+). With respect to regulation, appears to be allosterically activated by the binding of pArg-containing polypeptides to the pArg-binding pocket localized in the C-terminal domain of McsB. Functionally, catalyzes the specific phosphorylation of arginine residues in proteins. This chain is Protein-arginine kinase, found in Clostridium kluyveri (strain NBRC 12016).